A 142-amino-acid polypeptide reads, in one-letter code: MTRTINLQLPKRTSTYSSNFLKPAGCPKYEFVEGSKKPSRPRNKFIIMRTIFHNSSSKIVSAIWKHSPDQFQKYFQLLAEFEQNWHKHNHSPAAALTDAEAFRVIARSLHPQPRVIKRRQQKKKVKMLCGRFSRIEDVFSSL.

It localises to the nucleus. The sequence is that of Putative mating-type transcription factor from Eremothecium gossypii (strain ATCC 10895 / CBS 109.51 / FGSC 9923 / NRRL Y-1056) (Yeast).